The primary structure comprises 717 residues: Protein E2 homolog (717 aa).

The protein belongs to the poxviridae E2 protein family.

The sequence is that of Protein E2 homolog from Fowlpox virus (strain NVSL) (FPV).